We begin with the raw amino-acid sequence, 151 residues long: Homeobox protein HD-1 (151 aa).

The homeobox DNA-binding region spans 87–146 (ESIKSRRFPKFITEALERSFEIDQYPSEAEKARLAKICKLSTKQINNWFTNKRNRTKGHE).

The protein localises to the nucleus. The chain is Homeobox protein HD-1 (HD-1) from Encephalitozoon cuniculi (strain GB-M1) (Microsporidian parasite).